Reading from the N-terminus, the 102-residue chain is Co-chaperonin GroES (102 aa).

This sequence belongs to the GroES chaperonin family. Heptamer of 7 subunits arranged in a ring. Interacts with the chaperonin GroEL.

It is found in the cytoplasm. Functionally, together with the chaperonin GroEL, plays an essential role in assisting protein folding. The GroEL-GroES system forms a nano-cage that allows encapsulation of the non-native substrate proteins and provides a physical environment optimized to promote and accelerate protein folding. GroES binds to the apical surface of the GroEL ring, thereby capping the opening of the GroEL channel. The polypeptide is Co-chaperonin GroES (Streptomyces coelicolor (strain ATCC BAA-471 / A3(2) / M145)).